The chain runs to 156 residues: Ribosomal RNA large subunit methyltransferase H (156 aa).

Residues L72, G104, and 123–128 (LGKMVW) each bind S-adenosyl-L-methionine.

This sequence belongs to the RNA methyltransferase RlmH family. In terms of assembly, homodimer.

It is found in the cytoplasm. The enzyme catalyses pseudouridine(1915) in 23S rRNA + S-adenosyl-L-methionine = N(3)-methylpseudouridine(1915) in 23S rRNA + S-adenosyl-L-homocysteine + H(+). Specifically methylates the pseudouridine at position 1915 (m3Psi1915) in 23S rRNA. This chain is Ribosomal RNA large subunit methyltransferase H, found in Roseobacter denitrificans (strain ATCC 33942 / OCh 114) (Erythrobacter sp. (strain OCh 114)).